Here is a 495-residue protein sequence, read N- to C-terminus: UDP-glycosyltransferase 73C13 (495 aa).

Residue histidine 24 is the Proton acceptor of the active site. An an anthocyanidin-binding site is contributed by histidine 24. Aspartate 129 functions as the Charge relay in the catalytic mechanism. Residues alanine 356, glutamine 358, histidine 373, tryptophan 376, asparagine 377, serine 378, and glutamate 381 each coordinate UDP-alpha-D-glucose. An an anthocyanidin-binding site is contributed by alanine 396. 2 residues coordinate UDP-alpha-D-glucose: aspartate 397 and glutamine 398.

The protein belongs to the UDP-glycosyltransferase family.

It catalyses the reaction oleanolate + UDP-alpha-D-glucose = oleanolate 3-O-beta-D-glucoside + UDP + H(+). Catalyzes the transfer of a glucose (Glc) moiety from UDP-Glc to the C-3 position of the oleanane sapogenins oleanolate and hederagenin, and to the C-28 carboxylic group of the lupane sapogenin betulinate. The monoglucosylated hederagenin 3-O-beta-D-glucoside is a feeding deterrent of the yellow-striped flea beetle (Phyllotreta nemorum). In Barbarea vulgaris (Yellow rocket), this protein is UDP-glycosyltransferase 73C13.